A 461-amino-acid chain; its full sequence is Glycine--tRNA ligase (461 aa).

Substrate is bound by residues R100 and E163. ATP contacts are provided by residues 195-197, 205-210, 282-283, and 326-329; these read RNE, FRTREF, EL, and GLGR. 210–214 serves as a coordination point for substrate; sequence FEQME. 322–326 provides a ligand contact to substrate; it reads EPAAG.

This sequence belongs to the class-II aminoacyl-tRNA synthetase family. As to quaternary structure, homodimer.

The protein localises to the cytoplasm. The enzyme catalyses tRNA(Gly) + glycine + ATP = glycyl-tRNA(Gly) + AMP + diphosphate. Its function is as follows. Catalyzes the attachment of glycine to tRNA(Gly). This is Glycine--tRNA ligase from Corynebacterium glutamicum (strain ATCC 13032 / DSM 20300 / JCM 1318 / BCRC 11384 / CCUG 27702 / LMG 3730 / NBRC 12168 / NCIMB 10025 / NRRL B-2784 / 534).